Here is a 569-residue protein sequence, read N- to C-terminus: TBCC domain-containing protein 1 (569 aa).

Residues 304–435 (PRSHRIVVMS…LEDHMARTGL (132 aa)) form the C-CAP/cofactor C-like domain.

Belongs to the TBCC family.

The protein localises to the cytoplasm. It localises to the cytoskeleton. The protein resides in the microtubule organizing center. It is found in the centrosome. Its subcellular location is the spindle pole. Its function is as follows. Plays a role in the regulation of centrosome and Golgi apparatus positioning, with consequences on cell shape and cell migration. This Rattus norvegicus (Rat) protein is TBCC domain-containing protein 1 (Tbccd1).